We begin with the raw amino-acid sequence, 518 residues long: MLTNIRAFAQQKSRLSALRLVLAFILGASTALSFAPYSLWIIYPIAMSLALWQSESLNPKASFFHWLSFGFGCFAVGISWVHVSMDTFGGLPLPASVALMALLALYLALYPALTGLGLAWFTRTNSHSLWRNLLLFPALWTLTEWARGWVLTGFPWIWAGYSQTEGPLKALASIIGALGLSFIIAMIAGALALCFSKRYKSLLILLPITAVAAWVAPKLSQIQPTGESVKVALVQGNIPQSMKWEPEALWPTLLKYMDLSREHFDADIIVWPEAAIPAPESMVQDFLDNANKVANLNHTSIITGIISRQQEDFYNSLIVLGNHNQKQQDNPDYESDGSNQFKKHHLLPIGEFVPFQALLRPIAPFFNLPMSSFARGDYLQPNLSALGHKVAPAICYEIAFPEQLRDSVNLGTDLLLTVSNDAWFGTSNGPLQHMEIAQMRAIELGRPLVRATNNGVTAVVDENGNITAALPQFETGVLSATIPLVTGQTWFAKIGQTPLLILCGALLLVGFIRRQKQQ.

6 helical membrane-spanning segments follow: residues 22 to 42 (LAFILGASTALSFAPYSLWII), 63 to 83 (FFHWLSFGFGCFAVGISWVHV), 101 to 121 (ALLALYLALYPALTGLGLAWF), 134 to 154 (LLFPALWTLTEWARGWVLTGF), 174 to 194 (IIGALGLSFIIAMIAGALALC), and 202 to 222 (LLILLPITAVAAWVAPKLSQI). The region spanning 234 to 484 (VQGNIPQSMK…TGVLSATIPL (251 aa)) is the CN hydrolase domain. The active-site Proton acceptor is Glu-273. Lys-343 is a catalytic residue. Cys-395 serves as the catalytic Nucleophile. Residues 492 to 512 (AKIGQTPLLILCGALLLVGFI) form a helical membrane-spanning segment.

Belongs to the CN hydrolase family. Apolipoprotein N-acyltransferase subfamily.

It localises to the cell inner membrane. It catalyses the reaction N-terminal S-1,2-diacyl-sn-glyceryl-L-cysteinyl-[lipoprotein] + a glycerophospholipid = N-acyl-S-1,2-diacyl-sn-glyceryl-L-cysteinyl-[lipoprotein] + a 2-acyl-sn-glycero-3-phospholipid + H(+). It functions in the pathway protein modification; lipoprotein biosynthesis (N-acyl transfer). In terms of biological role, catalyzes the phospholipid dependent N-acylation of the N-terminal cysteine of apolipoprotein, the last step in lipoprotein maturation. The protein is Apolipoprotein N-acyltransferase of Shewanella oneidensis (strain ATCC 700550 / JCM 31522 / CIP 106686 / LMG 19005 / NCIMB 14063 / MR-1).